Consider the following 1347-residue polypeptide: Protein dispatched homolog 3 (1347 aa).

At 1 to 67 the chain is on the cytoplasmic side; sequence MDSEDDPLLQ…LGWAFTNPCC (67 aa). The helical transmembrane segment at 68–88 threads the bilayer; that stretch reads AGLVLFLGCSIPMVLSAFMFL. Over 89 to 417 the chain is Lumenal; it reads YYPPLDIDIS…YEVRRTFNND (329 aa). Positions 156 to 207 are disordered; the sequence is GNHSRPASRAPRSAPRDTVATQTSAANSSERRRREAPSPEGQVTNQSRARRG. N-linked (GlcNAc...) asparagine glycosylation occurs at Asn157. Residues 159 to 168 show a composition bias toward low complexity; it reads SRPASRAPRS. The 159-residue stretch at 412–570 folds into the SSD domain; the sequence is RTFNNDMLLA…LFTMPAALGL (159 aa). A helical transmembrane segment spans residues 418–438; it reads MLLAFISSSCIAALVYILTSC. Ser439 is a topological domain (cytoplasmic). A helical membrane pass occupies residues 440–460; it reads VFLSFFGIASIGLSCLVALFL. The Lumenal portion of the chain corresponds to 461–463; the sequence is YHV. A helical transmembrane segment spans residues 464-484; that stretch reads VFGIQYLGILNGVAAFVIVGI. The Cytoplasmic portion of the chain corresponds to 485-528; that stretch reads GVDDVFVFINTYRQATHLEDPQLRMIHTIQTAGKATFFTSLTTA. A helical transmembrane segment spans residues 529-549; it reads AAYAANVFSQIPAVHDFGLFM. Position 550 (Ser550) is a topological domain, lumenal. A helical membrane pass occupies residues 551–571; that stretch reads LIVTCCWLAVLFTMPAALGLW. Topologically, residues 572 to 684 are cytoplasmic; it reads SLYMAPLESS…WVLWAAVKSR (113 aa). A helical transmembrane segment spans residues 685–705; the sequence is WVIVGLFASILILSLVFASRL. Residues 706 to 1137 lie on the Lumenal side of the membrane; that stretch reads RPASRAPLLF…IFMEIIGVQS (432 aa). Asn976 is a glycosylation site (N-linked (GlcNAc...) asparagine). The helical transmembrane segment at 1138-1158 threads the bilayer; sequence ALYGLVLSLLICVAAVAVFTT. Residue His1159 is a topological domain, cytoplasmic. The chain crosses the membrane as a helical span at residues 1160-1180; sequence VLLLLPVLLSILGIVCLVVTI. Residues 1181 to 1246 lie on the Lumenal side of the membrane; the sequence is MYWSGWEMGA…TLEAVRHVGV (66 aa). A helical membrane pass occupies residues 1247-1267; sequence AIVSSALTTVIATVPLFFCII. At 1268–1281 the chain is on the cytoplasmic side; it reads APFAKFGKIVALNT. The chain crosses the membrane as a helical span at residues 1282-1302; sequence GVSILYTLTVSTALLGIMAPG. The Lumenal portion of the chain corresponds to 1303 to 1310; it reads SFTRTRTS. Residues 1311-1331 form a helical membrane-spanning segment; the sequence is FLKALGAVLLAGALGLGACLV. The Cytoplasmic portion of the chain corresponds to 1332–1347; the sequence is LLRSGYKIPLPSGATL.

Belongs to the patched family. As to expression, expressed in brain, retina, testis and thymus.

It is found in the endoplasmic reticulum membrane. Its subcellular location is the nucleus membrane. The protein localises to the cytoplasmic vesicle membrane. Functionally, plays a role in neuronal proliferation and differentiation. Plays a role in the accumulation of cellular cholesterol. Involved in intracellular lipid droplet formation. May contribute to cholesterol homeostasis in neuronal cells. This chain is Protein dispatched homolog 3, found in Mus musculus (Mouse).